A 358-amino-acid polypeptide reads, in one-letter code: MSQAVKVERRETLKQKPNTSQLGFGKYFTDYMLSYDYDADKGWHDLKIVPYGPIEISPAAQGVHYGQSVFEGLKAYKRDGEVALFRPEENFKRLNNSLARLEMPQVDEAELLEGLKQLVDIERDWIPEGEGQSLYIRPFVFATEGALGVGASHQYKLLIILSPSGAYYGGETLKPTKIYVEDEYVRAVRGGVGFAKVAGNYAASLLAQTNANKLGYDQVLWLDGVEQKYIEEVGSMNIFFVENGKVITPELNGSILPGITRKSIIELAKNLGYEVEERRVSIDELFESYDKGELTEVFGSGTAAVISPVGTLRYEDREIVINNNETGEITQKLYDVYTGIQNGTLEDKNGWRVVVPKY.

The residue at position 196 (K196) is an N6-(pyridoxal phosphate)lysine.

Belongs to the class-IV pyridoxal-phosphate-dependent aminotransferase family. Pyridoxal 5'-phosphate is required as a cofactor.

The enzyme catalyses L-leucine + 2-oxoglutarate = 4-methyl-2-oxopentanoate + L-glutamate. It catalyses the reaction L-isoleucine + 2-oxoglutarate = (S)-3-methyl-2-oxopentanoate + L-glutamate. The catalysed reaction is L-valine + 2-oxoglutarate = 3-methyl-2-oxobutanoate + L-glutamate. Its pathway is amino-acid biosynthesis; L-isoleucine biosynthesis; L-isoleucine from 2-oxobutanoate: step 4/4. It participates in amino-acid biosynthesis; L-leucine biosynthesis; L-leucine from 3-methyl-2-oxobutanoate: step 4/4. It functions in the pathway amino-acid biosynthesis; L-valine biosynthesis; L-valine from pyruvate: step 4/4. Its function is as follows. Acts on leucine, isoleucine and valine. This chain is Probable branched-chain-amino-acid aminotransferase (ilvE), found in Staphylococcus aureus (strain N315).